The following is a 72-amino-acid chain: Beta-defensin 104 (72 aa).

A signal peptide spans 1–22 (MQRLVLLLAISLLLYQDLPVRS). 3 disulfides stabilise this stretch: C30–C57, C37–C51, and C41–C58.

It belongs to the beta-defensin family. As to expression, high expression in the testis. Gastric antrum exhibited relatively high levels. A lower expression is observed in uterus and neutrophils thyroid gland, lung, and kidney. No detectable expression in other tissues tested.

Its subcellular location is the secreted. Functionally, has antimicrobial activity. Synergistic effects with lysozyme and DEFB103. In Homo sapiens (Human), this protein is Beta-defensin 104 (DEFB104A).